Here is a 410-residue protein sequence, read N- to C-terminus: PHAF1 protein At3g51130 (410 aa).

Belongs to the PHAF1 family.

This chain is PHAF1 protein At3g51130, found in Arabidopsis thaliana (Mouse-ear cress).